Consider the following 484-residue polypeptide: Glutamate mutase epsilon subunit (484 aa).

Arg66 contacts L-glutamate. Gly68 provides a ligand contact to adenosylcob(III)alamin. Residue Arg100 participates in L-glutamate binding. Adenosylcob(III)alamin is bound at residue Asn123. L-glutamate contacts are provided by residues 149–150, Glu171, and Tyr177; that span reads RH. Residue Pro180 participates in adenosylcob(III)alamin binding. Residue Tyr181 participates in L-glutamate binding. Residues Phe297, Lys326, Glu330, and Ile334 each coordinate adenosylcob(III)alamin.

Belongs to the methylaspartate mutase GlmE subunit family. Heterotetramer composed of 2 epsilon subunits (GlmE) and 2 sigma subunits (GlmS). GlmE exists as a homodimer and GlmS as a monomer. Requires adenosylcob(III)alamin as cofactor.

It catalyses the reaction (2S,3S)-3-methyl-L-aspartate = L-glutamate. It functions in the pathway amino-acid degradation; L-glutamate degradation via mesaconate pathway; acetate and pyruvate from L-glutamate: step 1/4. Functionally, catalyzes the carbon skeleton rearrangement of L-glutamate to L-threo-3-methylaspartate ((2S,3S)-3-methylaspartate). The protein is Glutamate mutase epsilon subunit of Desulfitobacterium hafniense (strain Y51).